The primary structure comprises 136 residues: Large ribosomal subunit protein eL27 (136 aa).

A KOW domain is found at 5–40 (MKPGKVVLVLAGRYSGRKAVIVKNIDDGTSDRPYSH). Residues lysine 27 and lysine 93 each carry the N6-acetyllysine modification.

The protein belongs to the eukaryotic ribosomal protein eL27 family. As to quaternary structure, component of the large ribosomal subunit. Interacts with RRP1B. Component of the large ribosomal subunit. Interacts with RRP1B. Interacts with DHX33.

The protein resides in the cytoplasm. Its subcellular location is the cytosol. It localises to the rough endoplasmic reticulum. Component of the large ribosomal subunit. Required for proper rRNA processing and maturation of 28S and 5.8S rRNAs. In Bos taurus (Bovine), this protein is Large ribosomal subunit protein eL27 (RPL27).